The primary structure comprises 470 residues: Desmin (470 aa).

Residues 2–108 (SQAYSSSQRV…QEFLTTRTNE (107 aa)) form a head region. Ser7 is subject to Phosphoserine; by CDK1. Residue Ser12 is modified to Phosphoserine; by AURKB. An Omega-N-methylarginine modification is found at Arg16. Thr17 is subject to Phosphothreonine; by AURKB and ROCK1. A Phosphoserine; by CDK1 modification is found at Ser28. Residue Ser31 is modified to Phosphoserine. Ser32 carries the post-translational modification Phosphoserine; by CDK1. An Asymmetric dimethylarginine; alternate modification is found at Arg37. Position 37 is an omega-N-methylarginine; alternate (Arg37). Phosphoserine is present on Ser45. Arg58 is subject to ADP-ribosylarginine. Ser60 carries the post-translational modification Phosphoserine; by AURKB. Arg70 is subject to Omega-N-methylarginine. Thr77 bears the Phosphothreonine; by ROCK1 mark. Ser81 is subject to Phosphoserine. An IF rod domain is found at 108 to 416 (EKVELQELND…KLLEGEESRI (309 aa)). Residues 109–141 (KVELQELNDRFANYIEKVRFLEQQNAALAAEVN) form a coil 1A region. A linker 1 region spans residues 142–151 (RLKGREPTRV). Residues 152 to 252 (AEIYEEELRE…HEEEIRELQA (101 aa)) form a coil 1B region. Positions 253–268 (QLQEQQVQVEMDMSKP) are linker 12. Positions 268–415 (PDLTAALRDI…RKLLEGEESR (148 aa)) are interaction with NEB. Positions 269-287 (DLTAALRDIRAQYETIAAK) are coil 2A. The linker 2 stretch occupies residues 288–295 (NISEAEEW). Ser290, Ser358, Ser361, and Ser424 each carry phosphoserine. A coil 2B region spans residues 296 to 412 (YKSKVSDLTQ…ATYRKLLEGE (117 aa)). The interval 413–470 (ESRINLPIQTFSALNFRETSPEQRGSEVHTKKTVMIKTIETRDGEVVSEATQQQHEVL) is tail. Residues 438–453 (SEVHTKKTVMIKTIET) form an interaction with CRYAB region.

The protein belongs to the intermediate filament family. Homomer. Interacts with DST. Interacts with MTM1. Interacts with EPPK1; interaction is dependent of higher-order structure of intermediate filament. Interacts with CRYAB. Interacts with NEB (via nebulin repeats 160-164). Interacts (via rod region) with NEBL (via nebulin repeats 1-5). Interacts with ASB2; the interaction targets DES for proteasomal degradation. Interacts with PKP1. Interacts with FLII. In terms of processing, ADP-ribosylation prevents ability to form intermediate filaments. Post-translationally, phosphorylation at Ser-7, Ser-28 and Ser-32 by CDK1 and phosphorylation at Ser-60 by AURKB contribute to efficient separation of desmin intermediate filaments during mitosis. Ubiquitination by a SCF-like complex containing ASB2 leads to proteasomal degradation.

It is found in the cytoplasm. Its subcellular location is the myofibril. The protein localises to the sarcomere. It localises to the z line. The protein resides in the cell membrane. It is found in the sarcolemma. Its subcellular location is the nucleus. The protein localises to the cell tip. It localises to the nucleus envelope. In terms of biological role, muscle-specific type III intermediate filament essential for proper muscular structure and function. Plays a crucial role in maintaining the structure of sarcomeres, inter-connecting the Z-disks and forming the myofibrils, linking them not only to the sarcolemmal cytoskeleton, but also to the nucleus and mitochondria, thus providing strength for the muscle fiber during activity. In adult striated muscle they form a fibrous network connecting myofibrils to each other and to the plasma membrane from the periphery of the Z-line structures. May act as a sarcomeric microtubule-anchoring protein: specifically associates with detyrosinated tubulin-alpha chains, leading to buckled microtubules and mechanical resistance to contraction. Required for nuclear membrane integrity, via anchoring at the cell tip and nuclear envelope, resulting in maintenance of microtubule-derived intracellular mechanical forces. Contributes to the transcriptional regulation of the NKX2-5 gene in cardiac progenitor cells during a short period of cardiomyogenesis and in cardiac side population stem cells in the adult. Plays a role in maintaining an optimal conformation of nebulette (NEB) on heart muscle sarcomeres to bind and recruit cardiac alpha-actin. This is Desmin (DES) from Bos taurus (Bovine).